A 209-amino-acid polypeptide reads, in one-letter code: Protein N-terminal glutamine amidohydrolase (209 aa).

Catalysis depends on residues C30, H83, and D99.

The protein belongs to the NTAQ1 family. As to quaternary structure, monomer. In terms of tissue distribution, widely expressed.

It is found in the cytoplasm. The protein localises to the cytosol. Its subcellular location is the nucleus. The catalysed reaction is N-terminal L-glutaminyl-[protein] + H2O = N-terminal L-glutamyl-[protein] + NH4(+). In terms of biological role, mediates the side-chain deamidation of N-terminal glutamine residues to glutamate, an important step in N-end rule pathway of protein degradation. Conversion of the resulting N-terminal glutamine to glutamate renders the protein susceptible to arginylation, polyubiquitination and degradation as specified by the N-end rule. Does not act on substrates with internal or C-terminal glutamine and does not act on non-glutamine residues in any position. Does not deaminate acetylated N-terminal glutamine. With the exception of proline, all tested second-position residues on substrate peptides do not greatly influence the activity. In contrast, a proline at position 2, virtually abolishes deamidation of N-terminal glutamine. This is Protein N-terminal glutamine amidohydrolase (Ntaq1) from Mus musculus (Mouse).